A 563-amino-acid chain; its full sequence is Anaerobic glycerol-3-phosphate dehydrogenase subunit A (563 aa).

20-48 (DVIIIGGGATGAGIARDCALRGIDCILLE) contacts FAD.

It belongs to the FAD-dependent glycerol-3-phosphate dehydrogenase family. Composed of a catalytic GlpA/B dimer and of membrane bound GlpC. FAD is required as a cofactor. It depends on FMN as a cofactor.

Its subcellular location is the cell inner membrane. It catalyses the reaction a quinone + sn-glycerol 3-phosphate = dihydroxyacetone phosphate + a quinol. The protein operates within polyol metabolism; glycerol degradation via glycerol kinase pathway; glycerone phosphate from sn-glycerol 3-phosphate (anaerobic route): step 1/1. The protein is Anaerobic glycerol-3-phosphate dehydrogenase subunit A (glpA) of Haemophilus influenzae (strain ATCC 51907 / DSM 11121 / KW20 / Rd).